The primary structure comprises 118 residues: C-X-C motif chemokine 17 (118 aa).

Positions 1–22 are cleaved as a signal peptide; that stretch reads MKVLISSLLLLLPLMLMSVVSS. 2 disulfides stabilise this stretch: C74/C102 and C76/C109.

Belongs to the intercrine alpha (chemokine CxC) family.

The protein localises to the secreted. Functionally, chemokine that acts as a chemoattractant for monocytes, macrophages and dendritic cells. Plays a role in angiogenesis and possibly in the development of tumors. Acts as an anti-inflammatory in the stomach. May play a role in the innate defense against infections. Activates the C-X-C chemokine receptor GPR35 to induce a rapid and transient rise in the level of intracellular calcium ions. The sequence is that of C-X-C motif chemokine 17 (CXCL17) from Bos taurus (Bovine).